Here is a 407-residue protein sequence, read N- to C-terminus: Inactive non-canonical poly(A) RNA polymerase protein Trf4-2 (407 aa).

Mg(2+)-binding residues include Asp85 and Asp87. In terms of domain architecture, PAP-associated spans 221 to 280; that stretch reads LALLLIQFLDYYGRKFDFFKYGISVLGQGGCVEKARLRSTLGENNWQSVLCIEDPVTPTN. Residues 354–390 are disordered; sequence LVQPSPTGSTSPSASASASEDERSGGPATIGFGRCDD. Over residues 357-371 the composition is skewed to low complexity; sequence PSPTGSTSPSASASA.

It belongs to the DNA polymerase type-B-like family.

This chain is Inactive non-canonical poly(A) RNA polymerase protein Trf4-2, found in Drosophila melanogaster (Fruit fly).